A 221-amino-acid chain; its full sequence is PKHD-type hydroxylase P9211_12561 (221 aa).

The Fe2OG dioxygenase domain maps to 80 to 174 (KVHGTMFTRS…RIVCVGWIQS (95 aa)). Fe cation-binding residues include H98, D100, and H155. Residue R165 participates in 2-oxoglutarate binding.

The cofactor is Fe(2+). Requires L-ascorbate as cofactor.

The sequence is that of PKHD-type hydroxylase P9211_12561 from Prochlorococcus marinus (strain MIT 9211).